A 313-amino-acid polypeptide reads, in one-letter code: Pyrimidine-specific ribonucleoside hydrolase RihB (313 aa).

E11 acts as the Proton acceptor in catalysis. Ca(2+) contacts are provided by E11, D16, and V124. Positions 227 and 239 each coordinate substrate. D240 serves as a coordination point for Ca(2+).

Belongs to the IUNH family. RihB subfamily. Homotetramer. Requires Ca(2+) as cofactor.

The catalysed reaction is a pyrimidine ribonucleoside + H2O = a pyrimidine nucleobase + D-ribose. Its function is as follows. Hydrolyzes cytidine or uridine to ribose and cytosine or uracil, respectively. Has a clear preference for cytidine over uridine. Strictly specific for ribonucleosides. The polypeptide is Pyrimidine-specific ribonucleoside hydrolase RihB (Shigella flexneri serotype 5b (strain 8401)).